Consider the following 131-residue polypeptide: Profilin-2 (131 aa).

Belongs to the profilin family. In terms of assembly, occurs in many kinds of cells as a complex with monomeric actin in a 1:1 ratio.

It is found in the cytoplasm. It localises to the cytoskeleton. Functionally, binds to actin and affects the structure of the cytoskeleton. At high concentrations, profilin prevents the polymerization of actin, whereas it enhances it at low concentrations. By binding to PIP2, it inhibits the formation of IP3 and DG. This Parietaria judaica (Pellitory-of-the-wall) protein is Profilin-2 (PRO2).